Here is a 320-residue protein sequence, read N- to C-terminus: Malate dehydrogenase (320 aa).

NAD(+) contacts are provided by residues Gly-10–Gly-15 and Asp-34. Substrate contacts are provided by Arg-83 and Arg-89. Residues Asn-96 and Ile-119–Asn-121 each bind NAD(+). Substrate contacts are provided by Asn-121 and Arg-152. His-176 functions as the Proton acceptor in the catalytic mechanism.

Belongs to the LDH/MDH superfamily. MDH type 3 family.

It catalyses the reaction (S)-malate + NAD(+) = oxaloacetate + NADH + H(+). Catalyzes the reversible oxidation of malate to oxaloacetate. This is Malate dehydrogenase from Sphingopyxis alaskensis (strain DSM 13593 / LMG 18877 / RB2256) (Sphingomonas alaskensis).